Here is a 61-residue protein sequence, read N- to C-terminus: Small ribosomal subunit protein uS14 (61 aa).

4 residues coordinate Zn(2+): C24, C27, C40, and C43.

Belongs to the universal ribosomal protein uS14 family. Zinc-binding uS14 subfamily. In terms of assembly, part of the 30S ribosomal subunit. Contacts proteins S3 and S10. Requires Zn(2+) as cofactor.

Its function is as follows. Binds 16S rRNA, required for the assembly of 30S particles and may also be responsible for determining the conformation of the 16S rRNA at the A site. This Ureaplasma parvum serovar 3 (strain ATCC 27815 / 27 / NCTC 11736) protein is Small ribosomal subunit protein uS14.